A 304-amino-acid polypeptide reads, in one-letter code: Polyisoprenyl-teichoic acid--peptidoglycan teichoic acid transferase TagU (304 aa).

Topologically, residues 1-3 are cytoplasmic; that stretch reads MKK. A helical; Signal-anchor for type II membrane protein transmembrane segment spans residues 4-24; it reads ALIAIGLILGTITVAIIGYGI. Over 25–304 the chain is Extracellular; sequence YLYSSIQNTA…GELKSHLELS (280 aa).

The protein belongs to the LytR/CpsA/Psr (LCP) family.

Its subcellular location is the cell membrane. Its pathway is cell wall biogenesis. Its function is as follows. May catalyze the final step in cell wall teichoic acid biosynthesis, the transfer of the anionic cell wall polymers (APs) from their lipid-linked precursor to the cell wall peptidoglycan (PG). In Halalkalibacterium halodurans (strain ATCC BAA-125 / DSM 18197 / FERM 7344 / JCM 9153 / C-125) (Bacillus halodurans), this protein is Polyisoprenyl-teichoic acid--peptidoglycan teichoic acid transferase TagU.